The following is a 300-amino-acid chain: 33 kDa chaperonin (300 aa).

2 disulfides stabilise this stretch: Cys247-Cys249 and Cys280-Cys283.

This sequence belongs to the HSP33 family. Post-translationally, under oxidizing conditions two disulfide bonds are formed involving the reactive cysteines. Under reducing conditions zinc is bound to the reactive cysteines and the protein is inactive.

It localises to the cytoplasm. Functionally, redox regulated molecular chaperone. Protects both thermally unfolding and oxidatively damaged proteins from irreversible aggregation. Plays an important role in the bacterial defense system toward oxidative stress. This is 33 kDa chaperonin from Prochlorococcus marinus (strain MIT 9515).